A 168-amino-acid chain; its full sequence is 3'-5' exoribonuclease MT2234.1 (168 aa).

Residue Asp-6 coordinates Mg(2+). An RNA binding region spans residues Asp-6–Phe-9.

Homodimer. The cofactor is Mg(2+).

In terms of biological role, exonuclease that cleaves single-stranded 3' overhangs of double-stranded RNA. This chain is 3'-5' exoribonuclease MT2234.1, found in Mycobacterium tuberculosis (strain CDC 1551 / Oshkosh).